A 144-amino-acid polypeptide reads, in one-letter code: Large ribosomal subunit protein uL11 (144 aa).

This sequence belongs to the universal ribosomal protein uL11 family. Part of the ribosomal stalk of the 50S ribosomal subunit. Interacts with L10 and the large rRNA to form the base of the stalk. L10 forms an elongated spine to which L12 dimers bind in a sequential fashion forming a multimeric L10(L12)X complex. In terms of processing, one or more lysine residues are methylated.

In terms of biological role, forms part of the ribosomal stalk which helps the ribosome interact with GTP-bound translation factors. In Francisella tularensis subsp. holarctica (strain OSU18), this protein is Large ribosomal subunit protein uL11.